Reading from the N-terminus, the 1235-residue chain is Gem-associated protein 5 (1235 aa).

The WD 1 repeat unit spans residues S55–G102. The interval N227–D263 is disordered. Positions E234 to K248 are enriched in basic and acidic residues. Phosphoserine is present on residues S289, S290, S351, and S354. The segment at D340–G368 is disordered. The segment covering D352–G368 has biased composition (polar residues). The residue at position 355 (T355) is a Phosphothreonine. A Phosphoserine modification is found at S357. T411 carries the phosphothreonine modification. WD repeat units lie at residues I428 to K469, K475 to R512, T565 to L605, Y611 to H650, T690 to W730, L739 to K779, and T788 to L828. Residues L443 to L447 carry the LXXLL motif motif. Positions K963 to S980 are enriched in basic and acidic residues. The interval K963–S983 is disordered.

Component of the core survival motor neuron (SMN) complex composed of Smn, Gem2, Gem3, rig/Gem5 and one of 3 almost identical Gem4 paralogs encoded by Glos/Gem4a, Gem4b or Gem4c. Interacts with nuclear receptors EcR, svp (seven up), usp (ultraspiracle), Hr39 and Hr3. Expressed in the brain and salivary glands of early and late second instar larvae. Expressed in nurse cells and oocytes.

Its subcellular location is the nucleus. The protein resides in the cytoplasm. The protein localises to the U-body. It is found in the gem. In terms of biological role, component of the survival motor neuron (SMN) complex that catalyzes the assembly of small nuclear ribonucleoproteins (snRNPs), the building blocks of the spliceosome, and thereby plays an important role in the splicing of cellular pre-mRNAs. Nuclear receptor cofactor for the ecdysone-regulated processes of molting and puparium formation. Acts downstream from ecdysone biosynthesis and release to control the expression of specific ecdysone-regulated genes such as Eip74EF (E74). Essential in muscle and neuronal tissues for motor function, including climbing ability and flight. In Drosophila melanogaster (Fruit fly), this protein is Gem-associated protein 5.